Reading from the N-terminus, the 341-residue chain is Putative [LysW]-lysine/[LysW]-ornithine hydrolase (341 aa).

Residue His-62 coordinates Zn(2+). Asp-64 is a catalytic residue. Asp-86 is a Zn(2+) binding site. Glu-115 (proton acceptor) is an active-site residue. Residues Glu-116, Glu-140, and His-309 each coordinate Zn(2+).

The protein belongs to the peptidase M20A family. LysK subfamily. Zn(2+) serves as cofactor. Requires Co(2+) as cofactor.

Its subcellular location is the cytoplasm. It catalyses the reaction [amino-group carrier protein]-C-terminal-gamma-(L-lysyl)-L-glutamate + H2O = [amino-group carrier protein]-C-terminal-L-glutamate + L-lysine. It carries out the reaction [amino-group carrier protein]-C-terminal-gamma-(L-ornithyl)-L-glutamate + H2O = [amino-group carrier protein]-C-terminal-L-glutamate + L-ornithine. The protein operates within amino-acid biosynthesis; L-lysine biosynthesis via AAA pathway; L-lysine from L-alpha-aminoadipate (Thermus route): step 5/5. It participates in amino-acid biosynthesis; L-arginine biosynthesis. Its function is as follows. Catalyzes the release of L-lysine from [LysW]-gamma-L-lysine and the release of L-ornithine from [LysW]-L-ornithine. The sequence is that of Putative [LysW]-lysine/[LysW]-ornithine hydrolase from Pyrobaculum aerophilum (strain ATCC 51768 / DSM 7523 / JCM 9630 / CIP 104966 / NBRC 100827 / IM2).